Here is a 24-residue protein sequence, read N- to C-terminus: Large ribosomal subunit protein uL10 (24 aa).

It belongs to the universal ribosomal protein uL10 family. In terms of assembly, part of the ribosomal stalk of the 50S ribosomal subunit. The N-terminus interacts with L11 and the large rRNA to form the base of the stalk. The C-terminus forms an elongated spine to which L12 dimers bind in a sequential fashion forming a multimeric L10(L12)X complex.

Forms part of the ribosomal stalk, playing a central role in the interaction of the ribosome with GTP-bound translation factors. The protein is Large ribosomal subunit protein uL10 (rplJ) of Enterobacter cloacae.